Consider the following 7763-residue polypeptide: Nonribosomal peptide synthetase agiA (7763 aa).

Residues Ala20–Glu168 form a condensation 1 region. Positions Glu469–Arg866 are adenylation 1. The 77-residue stretch at Leu995–Ser1071 folds into the Carrier 1 domain. At Ser1032 the chain carries O-(pantetheine 4'-phosphoryl)serine. Residues Ile1104–Gly1526 form a condensation 2 region. The adenylation 2 stretch occupies residues Phe1562–Arg1968. The region spanning Trp2090–Thr2166 is the Carrier 2 domain. Ser2127 bears the O-(pantetheine 4'-phosphoryl)serine mark. An epimerase (E) region spans residues Asp2212–Gly2556. The condensation 3 stretch occupies residues Asp2676–Phe3016. The tract at residues Trp3136–Arg3531 is adenylation 3. The 77-residue stretch at Gly3667–Tyr3743 folds into the Carrier 3 domain. Ser3704 bears the O-(pantetheine 4'-phosphoryl)serine mark. A condensation 4 region spans residues Val3789–Gln4238. The adenylation 4 stretch occupies residues Val4321–Arg4687. Residues Ala4806 to Ala4880 form the Carrier 4 domain. The residue at position 4840 (Ser4840) is an O-(pantetheine 4'-phosphoryl)serine. The tract at residues Ser4902–Asp5339 is condensation 5. The adenylation 5 stretch occupies residues Phe5361–Arg5765. The segment at Asp5820–Val5975 is S-adenosyl-L-methionine-dependent N-methyltransferase. One can recognise a Carrier 5 domain in the interval Glu6306 to Gln6381. Position 6341 is an O-(pantetheine 4'-phosphoryl)serine (Ser6341). The interval Leu6378–Ser6399 is disordered. Residues Ser6379 to Ser6399 are compositionally biased toward polar residues. Positions Met6424 to Leu6883 are condensation 6. Positions Arg6913–Arg7327 are adenylation 6. In terms of domain architecture, Carrier 6 spans Pro7446–Val7522. At Ser7483 the chain carries O-(pantetheine 4'-phosphoryl)serine. Residues Thr7542–Val7638 are thioesterase (TE).

Belongs to the NRP synthetase family.

In terms of biological role, nonribosomal peptide synthetase; part of the gene cluster that mediates the biosynthesis of the aspergillicins A and F, 2 cryptic cyclic hexa-depsipeptides. The hexamodular NRPS agiA catalyzes the condensation of the six amino acid residues including N-Me-L-O-Me-tyrosine, L-proline 1, L-proline 2, D-isoleucine, O-acetyl-threonine, and L-isoleucine. The starting condensation domain (C1) of agiA probably loads acetyl-CoA which is condensed on the N-terminus of threonine by the first module to yield O-acetyl-threonine. The second module then loads L-isoleucine. The epimerase (E) domain on module 2 is probably involved in the formation of the D-isoleucine moiety. Modules 3 and 4 further load 2 successive L-prolines. Module 5 is then involved in the condensation of O-Me-L-tyrosine produced by the O-methyltransferase agiB and the N-methyl transferase (NMeT) domain on module 5 probably catalyzes the N-methylation to yield the N-Me-L-O-Me-tyrosine moiety. The A domain of module 5 loads preferentially O-Me-L-tyrosine, but it can also accept L-phenylalanine, which leads to the production of aspergillicin G. Module 6 then loads the last residue, L-isoleucine. The C-terminal thiolesterase (TE) domain probably cyclizes the peptide using the hydroxy group from threonine to form the cyclic depsipeptide. This Aspergillus flavus (strain ATCC 200026 / FGSC A1120 / IAM 13836 / NRRL 3357 / JCM 12722 / SRRC 167) protein is Nonribosomal peptide synthetase agiA.